The sequence spans 488 residues: 2,3-bisphosphoglycerate-independent phosphoglycerate mutase (488 aa).

The active-site Phosphoserine intermediate is S10. S10 serves as a coordination point for Mn(2+). Residues H69, 99–100 (RD), R135, R142, 215–218 (RADR), and K290 contribute to the substrate site. Residues D359, H363, D400, H401, and H430 each coordinate Mn(2+).

Belongs to the BPG-independent phosphoglycerate mutase family. As to quaternary structure, monomer. The cofactor is Mn(2+).

The protein resides in the cytoplasm. The enzyme catalyses (2R)-2-phosphoglycerate = (2R)-3-phosphoglycerate. It participates in carbohydrate degradation; glycolysis; pyruvate from D-glyceraldehyde 3-phosphate: step 3/5. Functionally, catalyzes the interconversion of 2-phosphoglycerate and 3-phosphoglycerate. The protein is 2,3-bisphosphoglycerate-independent phosphoglycerate mutase of Prunus dulcis (Almond).